The following is a 342-amino-acid chain: Aquaporin-7 (342 aa).

Over 1-36 (MVQASGHRRSTRGSKMVSWSVIAKIQEILQRKMVRE) the chain is Cytoplasmic. The residue at position 20 (S20) is a Phosphoserine. The chain crosses the membrane as a helical span at residues 37–54 (FLAEFMSTYVMMVFGLGS). Topologically, residues 55 to 67 (VAHMVLNKKYGSY) are extracellular. A helical membrane pass occupies residues 68–85 (LGVNLGFGFGVTMGVHVA). Residues 86–89 (GRIS) lie on the Cytoplasmic side of the membrane. The segment at residues 90 to 103 (GAHMNAAVTFANCA) is an intramembrane region (discontinuously helical). The short motif at 94–96 (NAA) is the NPA 1 element. Over 104 to 111 (LGRVPWRK) the chain is Cytoplasmic. Residues 112 to 132 (FPVYVLGQFLGSFLAAATIYS) form a helical membrane-spanning segment. The Extracellular segment spans residues 133-170 (LFYTAILHFSGGQLMVTGPVATAGIFATYLPDHMTLWR). Residues 171–188 (GFLNEAWLTGMLQLCLFA) traverse the membrane as a helical segment. Over 189–200 (ITDQENNPALPG) the chain is Cytoplasmic. A helical transmembrane segment spans residues 201–217 (TEALVIGILVVIIGVSL). Over 218–221 (GMNT) the chain is Extracellular. The discontinuously helical intramembrane region spans 222–235 (GYAINPSRDLPPRI). The short motif at 226-228 (NPS) is the NPA 2 element. The Extracellular portion of the chain corresponds to 236 to 253 (FTFIAGWGKQVFSNGENW). Residues 254–275 (WWVPVVAPLLGAYLGGIIYLVF) form a helical membrane-spanning segment. Residues 276–342 (IGSTIPREPL…LHESMALEHF (67 aa)) are Cytoplasmic-facing.

It belongs to the MIP/aquaporin (TC 1.A.8) family. Homotetramer; each monomer provides an independent glycerol/water pore. Two homotetramers on opposing membranes can dimerize, forming a cell-cell junction. Interacts with PLIN1. Post-translationally, phosphorylation by PKA could prevent the interaction with PLIN1. Detected in the sperm head (at protein level). Detected in white adipose tissue.

It is found in the cell membrane. The protein resides in the cytoplasmic vesicle membrane. It localises to the lipid droplet. It carries out the reaction glycerol(in) = glycerol(out). The catalysed reaction is H2O(in) = H2O(out). It catalyses the reaction urea(in) = urea(out). Glycerol transport is regulated by pH, with the porin being permeable to glycerol at pH 7.4 but not at pH 5.5. Water permeability, however, is not influenced by pH. Inhibited by mercury ions. Its function is as follows. Aquaglyceroporins form homotetrameric transmembrane channels, with each monomer independently mediating glycerol and water transport across the plasma membrane along their osmotic gradient. Could also be permeable to urea. Mediates the efflux of glycerol, formed upon triglyceride hydrolysis, to avoid its accumulation in adipocytes and to make it available to other tissues. In the kidney, mediates the reabsorption of glycerol, preventing its loss in urine, again participating to energy homeostasis. In pancreatic beta cells, it also mediates the efflux of glycerol, regulating its intracellular levels. The protein is Aquaporin-7 of Homo sapiens (Human).